A 341-amino-acid polypeptide reads, in one-letter code: Methionine import ATP-binding protein MetN (341 aa).

The ABC transporter domain occupies 6-247; the sequence is IEIKKLSKNF…PQHQATRHLL (242 aa). 44-51 contacts ATP; it reads GMSGAGKS.

Belongs to the ABC transporter superfamily. Methionine importer (TC 3.A.1.24) family. In terms of assembly, the complex is composed of two ATP-binding proteins (MetN), two transmembrane proteins (MetI) and a solute-binding protein (MetQ).

It localises to the cell inner membrane. The catalysed reaction is L-methionine(out) + ATP + H2O = L-methionine(in) + ADP + phosphate + H(+). It catalyses the reaction D-methionine(out) + ATP + H2O = D-methionine(in) + ADP + phosphate + H(+). Its function is as follows. Part of the ABC transporter complex MetNIQ involved in methionine import. Responsible for energy coupling to the transport system. The sequence is that of Methionine import ATP-binding protein MetN from Protochlamydia amoebophila (strain UWE25).